The following is a 229-amino-acid chain: 2-C-methyl-D-erythritol 4-phosphate cytidylyltransferase (229 aa).

This sequence belongs to the IspD/TarI cytidylyltransferase family. IspD subfamily.

It carries out the reaction 2-C-methyl-D-erythritol 4-phosphate + CTP + H(+) = 4-CDP-2-C-methyl-D-erythritol + diphosphate. It participates in isoprenoid biosynthesis; isopentenyl diphosphate biosynthesis via DXP pathway; isopentenyl diphosphate from 1-deoxy-D-xylulose 5-phosphate: step 2/6. Functionally, catalyzes the formation of 4-diphosphocytidyl-2-C-methyl-D-erythritol from CTP and 2-C-methyl-D-erythritol 4-phosphate (MEP). The polypeptide is 2-C-methyl-D-erythritol 4-phosphate cytidylyltransferase (Neisseria meningitidis serogroup C (strain 053442)).